We begin with the raw amino-acid sequence, 337 residues long: Serpentine receptor class delta-18 (337 aa).

6 consecutive transmembrane segments (helical) span residues 2 to 22, 90 to 110, 130 to 150, 187 to 207, 236 to 256, and 270 to 290; these read IIFF…LNLL, VGLS…LLSF, LILV…TIFA, IYSI…IFIL, ALTI…FYFL, and SIYA…LYFV.

This sequence belongs to the nematode receptor-like protein srd family.

The protein resides in the membrane. This chain is Serpentine receptor class delta-18 (srd-18), found in Caenorhabditis elegans.